The chain runs to 160 residues: Putative control protein C.MjaVP (160 aa).

Functionally, may be involved in control of expression of the type II restriction enzyme MjaV and/or its methyltransferase M.MjaV. This chain is Putative control protein C.MjaVP, found in Methanocaldococcus jannaschii (strain ATCC 43067 / DSM 2661 / JAL-1 / JCM 10045 / NBRC 100440) (Methanococcus jannaschii).